The following is a 359-amino-acid chain: 4-hydroxy-3-methylbut-2-en-1-yl diphosphate synthase (flavodoxin) (359 aa).

[4Fe-4S] cluster is bound by residues C264, C267, C299, and E306.

It belongs to the IspG family. [4Fe-4S] cluster is required as a cofactor.

It carries out the reaction (2E)-4-hydroxy-3-methylbut-2-enyl diphosphate + oxidized [flavodoxin] + H2O + 2 H(+) = 2-C-methyl-D-erythritol 2,4-cyclic diphosphate + reduced [flavodoxin]. It participates in isoprenoid biosynthesis; isopentenyl diphosphate biosynthesis via DXP pathway; isopentenyl diphosphate from 1-deoxy-D-xylulose 5-phosphate: step 5/6. Converts 2C-methyl-D-erythritol 2,4-cyclodiphosphate (ME-2,4cPP) into 1-hydroxy-2-methyl-2-(E)-butenyl 4-diphosphate. This Helicobacter pylori (strain P12) protein is 4-hydroxy-3-methylbut-2-en-1-yl diphosphate synthase (flavodoxin).